We begin with the raw amino-acid sequence, 531 residues long: Multidrug resistance protein fnx1 (531 aa).

Topologically, residues 1–30 (MVDQVNLATEQTSLLYPEVSRKKEELSVNK) are cytoplasmic. Residues 31–51 (WTILPALWVGGFLSALDMTIV) form a helical membrane-spanning segment. The Lumenal segment spans residues 52 to 225 (ASLYPVIGSE…NASLLSRIDY (174 aa)). Residues 226-246 (LGSFLLVTGITALVVTFNMGG) traverse the membrane as a helical segment. Over 247-252 (DAFPWV) the chain is Cytoplasmic. A helical transmembrane segment spans residues 253–273 (SPVIITLLVSSVLILFAFYWV). Topologically, residues 274 to 297 (EKNIAVEPIAPVEILSQPTPLNVC) are lumenal. A helical membrane pass occupies residues 298-318 (LGNFFNAFCSFVIVYELPLFF). At 319–360 (ETTLLMPSSEAGVRIFPYVISTSVGSLCSGLYMKKTGRYRNL) the chain is on the cytoplasmic side. The chain crosses the membrane as a helical span at residues 361–381 (VIAGFFFMLMGIVSFAVLTSF). Residues 382 to 385 (GHRT) are Lumenal-facing. The helical transmembrane segment at 386-406 (PLILISLCLAMTGCSYGMNLT) threads the bilayer. Residues 407–496 (STLIAIISSL…QKLVIKSYAT (90 aa)) lie on the Cytoplasmic side of the membrane. Residues 497–517 (AFTWTFALVAIIAFAGFWCSL) traverse the membrane as a helical segment. Over 518–531 (RIKQFYLHTSVDRS) the chain is Lumenal.

Belongs to the major facilitator superfamily.

It is found in the vacuole membrane. Functionally, efflux transporter. Confers resistance to a variety of toxic compounds. The protein is Multidrug resistance protein fnx1 (fnx1) of Schizosaccharomyces pombe (strain 972 / ATCC 24843) (Fission yeast).